A 214-amino-acid polypeptide reads, in one-letter code: Probable transaldolase (214 aa).

The active-site Schiff-base intermediate with substrate is the lysine 83.

The protein belongs to the transaldolase family. Type 3B subfamily.

It is found in the cytoplasm. The catalysed reaction is D-sedoheptulose 7-phosphate + D-glyceraldehyde 3-phosphate = D-erythrose 4-phosphate + beta-D-fructose 6-phosphate. Its pathway is carbohydrate degradation; pentose phosphate pathway; D-glyceraldehyde 3-phosphate and beta-D-fructose 6-phosphate from D-ribose 5-phosphate and D-xylulose 5-phosphate (non-oxidative stage): step 2/3. Functionally, transaldolase is important for the balance of metabolites in the pentose-phosphate pathway. The protein is Probable transaldolase of Geotalea daltonii (strain DSM 22248 / JCM 15807 / FRC-32) (Geobacter daltonii).